The following is a 382-amino-acid chain: S-adenosylmethionine synthase (382 aa).

His16 serves as a coordination point for ATP. Position 18 (Asp18) interacts with Mg(2+). Glu44 serves as a coordination point for K(+). L-methionine is bound by residues Glu57 and Gln100. Residues Gln100–Asn110 are flexible loop. ATP contacts are provided by residues Asp165–Lys167, Arg231–Phe232, Asp240, Arg246–Lys247, and Lys267. Asp240 lines the L-methionine pocket. Lys271 is an L-methionine binding site.

The protein belongs to the AdoMet synthase family. Homotetramer; dimer of dimers. Mg(2+) is required as a cofactor. The cofactor is K(+).

Its subcellular location is the cytoplasm. It carries out the reaction L-methionine + ATP + H2O = S-adenosyl-L-methionine + phosphate + diphosphate. It participates in amino-acid biosynthesis; S-adenosyl-L-methionine biosynthesis; S-adenosyl-L-methionine from L-methionine: step 1/1. In terms of biological role, catalyzes the formation of S-adenosylmethionine (AdoMet) from methionine and ATP. The overall synthetic reaction is composed of two sequential steps, AdoMet formation and the subsequent tripolyphosphate hydrolysis which occurs prior to release of AdoMet from the enzyme. In Legionella pneumophila (strain Lens), this protein is S-adenosylmethionine synthase.